Consider the following 985-residue polypeptide: Eukaryotic translation initiation factor 4E transporter (985 aa).

Residues 1 to 24 (MDRRSMGETESGDAFLDLKKPPAS) are disordered. Phosphoserine is present on S5. The YXXXXLphi motif signature appears at 30–36 (YTKEELL). A phosphoserine mark is found at S74, S78, S115, S120, S136, and S138. The segment at 131–161 (VSSRRSGSPLEKDSDGLRLLGGRRIGSGRII) is interaction with CSDE1. The short motif at 195–211 (RREFGDSKRVFGERRRN) is the Nuclear localization signal element. The disordered stretch occupies residues 208-230 (RRRNDSYTEEEPEWFSAGPTSQS). Residues 219–240 (PEWFSAGPTSQSETIELTGFDD) form an interaction with DDX6 region. A phosphoserine mark is found at S301, S345, S353, and S374. Residue K410 forms a Glycyl lysine isopeptide (Lys-Gly) (interchain with G-Cter in SUMO2) linkage. S417 is modified (phosphoserine). Positions 438–447 (VEAGLKGLKV) match the Nuclear export signal motif. Residues 448-490 (DQQVKNSTPFMAEHLEETLSAVTNNRQLKKDGDMTAFNKLVST) are interaction with LSM14A. At K486 the chain carries N6-acetyllysine. Residues S513, S564, and S587 each carry the phosphoserine modification. The Nuclear export signal signature appears at 613–638 (ITAQMSQLELQQAALEGLALPHDLAV). Disordered regions lie at residues 664–693 (QQRVTKSPAPVHRGNSSSPAPAASITSMLS) and 707–803 (ESKE…PTTP). S693 bears the Phosphoserine mark. Residues 695–713 (SFTPTSVIRKMYESKEKSK) form an interaction with PATL1 region. Basic and acidic residues-rich tracts occupy residues 707-717 (ESKEKSKEEPA) and 725-735 (DSKEDTQKASE). Low complexity predominate over residues 736 to 746 (ENLLSSSSVPS). S752 carries the post-translational modification Phosphoserine. Positions 754–776 (TTNSKLSALQRSSCSTPLSQANR) are enriched in polar residues. 2 positions are modified to phosphoserine: S920 and S951. The disordered stretch occupies residues 922 to 953 (QTTPQNVPSRSGLPHMHSQLEHRPSQRSSSPV). An interaction with LSM14A region spans residues 940–985 (QLEHRPSQRSSSPVGLAKWFGSDVLQQPLPSMPAKVISVDELEYRQ).

This sequence belongs to the 4E-T/EIF4E-T family. Interacts (via YXXXXLphi motif) with EIF4E. Interacts (via YXXXXLphi motif) with EIF4E2. Interacts with DDX6. Interacts with CSDE1/UNR. Interacts with CNOT1; promoting association with the CCR4-NOT complex. Interacts with LSM14A; promoting EIF4ENIF1 localization to P-bodies. Interacts with PATL1. Interacts with importin beta only in the presence of importin alpha, suggesting a direct interaction with importin alpha. Interacts with APOBEC3G in an RNA-dependent manner. In terms of processing, phosphorylation by MAPK8/JNK1 and or MAPK9/JNK2 in response to oxidative stress promotes P-body assembly. Phosphorylated during meiotic maturation. As to expression, widely expressed.

It localises to the cytoplasm. It is found in the P-body. The protein localises to the nucleus. Its subcellular location is the PML body. The protein resides in the nucleus speckle. In terms of biological role, EIF4E-binding protein that regulates translation and stability of mRNAs in processing bodies (P-bodies). Plays a key role in P-bodies to coordinate the storage of translationally inactive mRNAs in the cytoplasm and prevent their degradation. Acts as a binding platform for multiple RNA-binding proteins: promotes deadenylation of mRNAs via its interaction with the CCR4-NOT complex, and blocks decapping via interaction with eIF4E (EIF4E and EIF4E2), thereby protecting deadenylated and repressed mRNAs from degradation. Component of a multiprotein complex that sequesters and represses translation of proneurogenic factors during neurogenesis. Promotes miRNA-mediated translational repression. Required for the formation of P-bodies. Involved in mRNA translational repression mediated by the miRNA effector TNRC6B by protecting TNRC6B-targeted mRNAs from decapping and subsequent decay. Also acts as a nucleoplasmic shuttling protein, which mediates the nuclear import of EIF4E and DDX6 by a piggy-back mechanism. The sequence is that of Eukaryotic translation initiation factor 4E transporter from Homo sapiens (Human).